We begin with the raw amino-acid sequence, 136 residues long: S-protein homolog 6 (136 aa).

Residues 1 to 17 form the signal peptide; that stretch reads MFIIIFIVLISLIGCET. Residues N76 and N108 are each glycosylated (N-linked (GlcNAc...) asparagine).

It belongs to the plant self-incompatibility (S1) protein family.

It localises to the secreted. This is S-protein homolog 6 from Arabidopsis thaliana (Mouse-ear cress).